The following is a 1067-amino-acid chain: Sal-like protein 4 (1067 aa).

The tract at residues 1–62 is disordered; the sequence is MSRRKQAKPQ…SEDSIPVKRP (62 aa). Over residues 15 to 42 the composition is skewed to low complexity; the sequence is EEGQGEQPQQLPSPDLAEALAAEEPGAP. Ser53 carries the post-translational modification Phosphoserine. The segment at 68 to 90 adopts a C2H2-type 1; atypical zinc-finger fold; sequence HICNKCCAEFFSLSEFMEHKKSC. Residues 115–140 are disordered; the sequence is ALSHQLGSPSNKDSLQENGSSSGDLK. Residues 119–137 are compositionally biased toward polar residues; that stretch reads QLGSPSNKDSLQENGSSSG. Lys151 participates in a covalent cross-link: Glycyl lysine isopeptide (Lys-Gly) (interchain with G-Cter in SUMO1); alternate. A Glycyl lysine isopeptide (Lys-Gly) (interchain with G-Cter in SUMO2); alternate cross-link involves residue Lys151. Glycyl lysine isopeptide (Lys-Gly) (interchain with G-Cter in SUMO2) cross-links involve residues Lys170, Lys185, and Lys291. Ser308 is modified (phosphoserine). A Glycyl lysine isopeptide (Lys-Gly) (interchain with G-Cter in SUMO1); alternate cross-link involves residue Lys317. Lys317 participates in a covalent cross-link: Glycyl lysine isopeptide (Lys-Gly) (interchain with G-Cter in SUMO2); alternate. Lys377 is covalently cross-linked (Glycyl lysine isopeptide (Lys-Gly) (interchain with G-Cter in SUMO2)). Residue Lys379 forms a Glycyl lysine isopeptide (Lys-Gly) (interchain with G-Cter in SUMO1); alternate linkage. Lys379 is covalently cross-linked (Glycyl lysine isopeptide (Lys-Gly) (interchain with G-Cter in SUMO2); alternate). 2 consecutive C2H2-type zinc fingers follow at residues 387 to 409 and 415 to 437; these read HKCR…LRSH and YVCP…LQRH. Lys441 participates in a covalent cross-link: Glycyl lysine isopeptide (Lys-Gly) (interchain with G-Cter in SUMO2). The interval 471–521 is disordered; sequence DESSLSVDAEPVPVTGTPSLGLPQKLTSGPNSRDLMGGSLPNDMQPGPSPE. Lys557 is covalently cross-linked (Glycyl lysine isopeptide (Lys-Gly) (interchain with G-Cter in SUMO2)). C2H2-type zinc fingers lie at residues 573–595 and 601–623; these read NECL…YRTH and FQCK…LGVH. Glycyl lysine isopeptide (Lys-Gly) (interchain with G-Cter in SUMO2) cross-links involve residues Lys604 and Lys630. Residues 633 to 655 form a C2H2-type 6 zinc finger; that stretch reads HSCPICQKKFTNAVMLQQHIRMH. Disordered regions lie at residues 682–716 and 752–835; these read ENGS…STVS and RQSS…SLPP. The segment covering 693–704 has biased composition (acidic residues); it reads DAAEGMEAEEVC. Polar residues-rich tracts occupy residues 707–716 and 752–761; these read DVPSGPSTVS and RQSSRENSSL. Phosphoserine is present on residues Ser785 and Ser798. A compositionally biased stretch (polar residues) spans 798–809; the sequence is SPANSQAGSVKS. Residues 810–829 show a composition bias toward basic and acidic residues; sequence RSPEGHKAEGVESCRVDTEG. Lys846 is covalently cross-linked (Glycyl lysine isopeptide (Lys-Gly) (interchain with G-Cter in SUMO1); alternate). Residue Lys846 forms a Glycyl lysine isopeptide (Lys-Gly) (interchain with G-Cter in SUMO2); alternate linkage. The C2H2-type 7 zinc-finger motif lies at 880-902; the sequence is HCCTRCGKNFSSASALQIHERTH. Lys906 is covalently cross-linked (Glycyl lysine isopeptide (Lys-Gly) (interchain with G-Cter in SUMO2)). The C2H2-type 8 zinc-finger motif lies at 908 to 930; the sequence is FVCNICGRAFTTKGNLKVHYMTH. Residues Lys942 and Lys957 each participate in a glycyl lysine isopeptide (Lys-Gly) (interchain with G-Cter in SUMO2) cross-link. Ser1029 carries the phosphoserine modification.

It belongs to the sal C2H2-type zinc-finger protein family. In terms of assembly, interacts with POU5F1/OCT4. Interacts with NANOG. Interacts with BEND3. Interacts with NSD2 (via PHD-type zinc fingers 1, 2 and 3). Interacts with NRBP1. Post-translationally, sumoylation with both SUMO1 and SUMO2 regulates the stability, subcellular localization, transcriptional activity, and may reduce interaction with POU5F1/OCT4.

Its subcellular location is the cytoplasm. It localises to the nucleus. Its function is as follows. Transcription factor with a key role in the maintenance and self-renewal of embryonic and hematopoietic stem cells. The protein is Sal-like protein 4 (Sall4) of Mus musculus (Mouse).